The following is a 428-amino-acid chain: 3-phosphoshikimate 1-carboxyvinyltransferase (428 aa).

Positions 22, 23, and 27 each coordinate 3-phosphoshikimate. Residue Lys22 coordinates phosphoenolpyruvate. The phosphoenolpyruvate site is built by Gly94 and Arg122. The 3-phosphoshikimate site is built by Ser167, Gln169, Asp314, and Lys341. A phosphoenolpyruvate-binding site is contributed by Gln169. Asp314 acts as the Proton acceptor in catalysis. The phosphoenolpyruvate site is built by Arg345 and Arg387.

Belongs to the EPSP synthase family. As to quaternary structure, monomer.

It is found in the cytoplasm. It carries out the reaction 3-phosphoshikimate + phosphoenolpyruvate = 5-O-(1-carboxyvinyl)-3-phosphoshikimate + phosphate. Its pathway is metabolic intermediate biosynthesis; chorismate biosynthesis; chorismate from D-erythrose 4-phosphate and phosphoenolpyruvate: step 6/7. Its function is as follows. Catalyzes the transfer of the enolpyruvyl moiety of phosphoenolpyruvate (PEP) to the 5-hydroxyl of shikimate-3-phosphate (S3P) to produce enolpyruvyl shikimate-3-phosphate and inorganic phosphate. The polypeptide is 3-phosphoshikimate 1-carboxyvinyltransferase (Geotalea uraniireducens (strain Rf4) (Geobacter uraniireducens)).